A 563-amino-acid polypeptide reads, in one-letter code: Methylcrotonoyl-CoA carboxylase beta chain, mitochondrial (563 aa).

The transit peptide at 1–22 (MWAVLRLALRPCARASPAGPRA) directs the protein to the mitochondrion. One can recognise a CoA carboxyltransferase N-terminal domain in the interval 49–306 (MKALVNQLHE…QKKLDVTIEP (258 aa)). Residues 49–555 (MKALVNQLHE…SAALNAPIEK (507 aa)) form a carboxyltransferase region. Residue lysine 70 is modified to N6-acetyllysine; alternate. N6-succinyllysine; alternate is present on lysine 70. N6-succinyllysine is present on lysine 141. The region spanning 309 to 555 (EPLFPADELY…SAALNAPIEK (247 aa)) is the CoA carboxyltransferase C-terminal domain. Positions 343–372 (RFTEFKAFYGDTLVTGFARIFGYPVGIVGN) are acyl-CoA binding. N6-acetyllysine; alternate is present on lysine 495. Lysine 495 carries the post-translational modification N6-succinyllysine; alternate. An N6-acetyllysine modification is found at lysine 511.

It belongs to the AccD/PCCB family. In terms of assembly, probably a dodecamer composed of six biotin-containing alpha subunits (MCCC1) and six beta (MCCC2) subunits.

The protein localises to the mitochondrion matrix. It catalyses the reaction 3-methylbut-2-enoyl-CoA + hydrogencarbonate + ATP = 3-methyl-(2E)-glutaconyl-CoA + ADP + phosphate + H(+). It functions in the pathway amino-acid degradation; L-leucine degradation; (S)-3-hydroxy-3-methylglutaryl-CoA from 3-isovaleryl-CoA: step 2/3. Its function is as follows. Carboxyltransferase subunit of the 3-methylcrotonyl-CoA carboxylase, an enzyme that catalyzes the conversion of 3-methylcrotonyl-CoA to 3-methylglutaconyl-CoA, a critical step for leucine and isovaleric acid catabolism. The sequence is that of Methylcrotonoyl-CoA carboxylase beta chain, mitochondrial (MCCC2) from Homo sapiens (Human).